A 241-amino-acid chain; its full sequence is ATP synthase subunit a (241 aa).

Transmembrane regions (helical) follow at residues 30-50 (GQVF…VVVG), 91-111 (FIGT…LVPW), 128-148 (INTT…AGLS), 193-213 (LVVA…VMFL), and 214-234 (GLFT…YYIG).

This sequence belongs to the ATPase A chain family. F-type ATPases have 2 components, CF(1) - the catalytic core - and CF(0) - the membrane proton channel. CF(1) has five subunits: alpha(3), beta(3), gamma(1), delta(1), epsilon(1). CF(0) has four main subunits: a, b, b' and c.

It is found in the cellular thylakoid membrane. In terms of biological role, key component of the proton channel; it plays a direct role in the translocation of protons across the membrane. This chain is ATP synthase subunit a, found in Prochlorococcus marinus (strain MIT 9211).